Here is a 320-residue protein sequence, read N- to C-terminus: uncharacterized protein (320 aa).

The interval 196–273 (VVPEYDFDSE…RSKNNSNTTK (78 aa)) is disordered. Residues 200–210 (YDFDSESESDN) show a composition bias toward acidic residues. The segment covering 211 to 226 (SEEKRFVPVLETEKAP) has biased composition (basic and acidic residues). Polar residues predominate over residues 248–273 (QPKNPKQTTLKNTLDTRSKNNSNTTK).

This is an uncharacterized protein from Acanthamoeba polyphaga mimivirus (APMV).